Here is a 60-residue protein sequence, read N- to C-terminus: uncharacterized protein (60 aa).

This is an uncharacterized protein from Enterobacteria phage T4 (Bacteriophage T4).